We begin with the raw amino-acid sequence, 234 residues long: Urease accessory protein UreF (234 aa).

The protein belongs to the UreF family. In terms of assembly, ureD, UreF and UreG form a complex that acts as a GTP-hydrolysis-dependent molecular chaperone, activating the urease apoprotein by helping to assemble the nickel containing metallocenter of UreC. The UreE protein probably delivers the nickel.

It is found in the cytoplasm. Its function is as follows. Required for maturation of urease via the functional incorporation of the urease nickel metallocenter. This is Urease accessory protein UreF from Kocuria rhizophila (strain ATCC 9341 / DSM 348 / NBRC 103217 / DC2201).